The primary structure comprises 504 residues: Peroxisomal N(1)-acetyl-spermine/spermidine oxidase (504 aa).

Residues Ala16, Glu37, Arg45, and 61-62 (HW) contribute to the FAD site. His64 and Val187 together coordinate substrate. Val240 provides a ligand contact to FAD. Asn313 serves as a coordination point for substrate. FAD contacts are provided by residues Glu465 and 474-475 (TT). The Microbody targeting signal motif lies at 502–504 (PRL).

Belongs to the flavin monoamine oxidase family. In terms of assembly, monomer. Requires FAD as cofactor. Widely expressed at different developmental stages. Expressed at high level in the liver and the stomach, expressed at lower level in heart, spleen, thymus, small intestine, muscle, pancreas, uterus, and breast and expressed at very low level in brain, kidney, lung, testis, skin, adrenal gland and prostate gland.

The protein resides in the peroxisome. It is found in the cytoplasm. It carries out the reaction N(1)-acetylspermine + O2 + H2O = 3-acetamidopropanal + spermidine + H2O2. The catalysed reaction is N(1)-acetylspermidine + O2 + H2O = 3-acetamidopropanal + putrescine + H2O2. The enzyme catalyses N(1),N(12)-diacetylspermine + O2 + H2O = 3-acetamidopropanal + N(1)-acetylspermidine + H2O2. It functions in the pathway amine and polyamine metabolism; spermine metabolism. Flavoenzyme which catalyzes the oxidation of N(1)-acetylspermine to spermidine and is thus involved in the polyamine back-conversion. Can also oxidize N(1)-acetylspermidine to putrescine. Substrate specificity: N(1)-acetylspermine = N(1)-acetylspermidine &gt; N(1),N(12)-diacylspermine &gt;&gt; spermine. Does not oxidize spermidine. Plays an important role in the regulation of polyamine intracellular concentration and has the potential to act as a determinant of cellular sensitivity to the antitumor polyamine analogs. The sequence is that of Peroxisomal N(1)-acetyl-spermine/spermidine oxidase (Paox) from Mus musculus (Mouse).